Here is a 68-residue protein sequence, read N- to C-terminus: ISHGFRYDAIAKLFRPFFCGDGYGHRIGETVYYAGSLKYCARSFDVGAEIICKGFYYFGIYKRRVSEV.

Residue serine 66 is modified to Phosphoserine.

The polypeptide is Erythrodihydroneopterin triphosphate synthetase (Cavia porcellus (Guinea pig)).